The following is a 275-amino-acid chain: Vitamin B12-binding protein (275 aa).

Residues 1–27 form the signal peptide; sequence MKWIKSTGSIGLSLLLFLSSFSHSLYA. The region spanning 31-275 is the Fe/B12 periplasmic-binding domain; the sequence is RVISLSPSTT…LCQQLNDNGS (245 aa). Residue Tyr58 coordinates cyanocob(III)alamin. A disulfide bond links Cys191 and Cys267.

This sequence belongs to the BtuF family. The complex is composed of two ATP-binding proteins (BtuD), two transmembrane proteins (BtuC) and a solute-binding protein (BtuF).

The protein localises to the periplasm. Its function is as follows. Part of the ABC transporter complex BtuCDF involved in vitamin B12 import. Binds vitamin B12 and delivers it to the periplasmic surface of BtuC. This chain is Vitamin B12-binding protein, found in Photorhabdus laumondii subsp. laumondii (strain DSM 15139 / CIP 105565 / TT01) (Photorhabdus luminescens subsp. laumondii).